A 632-amino-acid polypeptide reads, in one-letter code: Probable potassium transport system protein Kup 1 (632 aa).

Helical transmembrane passes span leucine 17–leucine 37, leucine 60–leucine 80, threonine 106–isoleucine 126, leucine 146–serine 166, phenylalanine 175–isoleucine 195, alanine 210–leucine 230, tryptophan 254–leucine 274, alanine 292–isoleucine 312, isoleucine 344–phenylalanine 364, leucine 370–phenylalanine 390, leucine 401–alanine 421, and isoleucine 426–threonine 446.

This sequence belongs to the HAK/KUP transporter (TC 2.A.72) family.

The protein localises to the cell inner membrane. It carries out the reaction K(+)(in) + H(+)(in) = K(+)(out) + H(+)(out). Transport of potassium into the cell. Likely operates as a K(+):H(+) symporter. The chain is Probable potassium transport system protein Kup 1 from Rhizobium johnstonii (strain DSM 114642 / LMG 32736 / 3841) (Rhizobium leguminosarum bv. viciae).